The chain runs to 95 residues: Large ribosomal subunit protein uL23 (95 aa).

It belongs to the universal ribosomal protein uL23 family. As to quaternary structure, part of the 50S ribosomal subunit. Contacts protein L29, and trigger factor when it is bound to the ribosome.

In terms of biological role, one of the early assembly proteins it binds 23S rRNA. One of the proteins that surrounds the polypeptide exit tunnel on the outside of the ribosome. Forms the main docking site for trigger factor binding to the ribosome. This Shouchella clausii (strain KSM-K16) (Alkalihalobacillus clausii) protein is Large ribosomal subunit protein uL23.